Reading from the N-terminus, the 333-residue chain is Gap junction alpha-4 protein (333 aa).

The Cytoplasmic portion of the chain corresponds to 1–20; that stretch reads MGDWGFLEKLLDQVQEHSTV. Residues 21-40 traverse the membrane as a helical segment; that stretch reads VGKIWLTVLFIFRILILGLA. At 41 to 76 the chain is on the extracellular side; the sequence is GESVWGDEQSDFECNTAQPGCTNVCYDQAFPISHIR. A helical membrane pass occupies residues 77–99; the sequence is YWVLQFLFVSTPTLIYLGHVIYL. Residues 100–148 lie on the Cytoplasmic side of the membrane; it reads SRREERLRQKEGELRALPSKDLHVERALAAIEHQMAKISVAEDGRLRIR. A helical transmembrane segment spans residues 149-171; that stretch reads GALMGTYVVSVLCKSVLEAGFLY. Over 172–208 the chain is Extracellular; sequence GQWRLYGWTMEPVFVCQRAPCPHIVDCYVSRPTEKTI. Residues 209–231 form a helical membrane-spanning segment; sequence FIIFMLVVGVISLVLNLLELVHL. Over 232–333 the chain is Cytoplasmic; the sequence is LCRCVSREIK…NSSASKKQYV (102 aa). Positions 292–333 are disordered; that stretch reads ANLTTEERLTSSRPPPFVNTAPQGGRKSPSRPNSSASKKQYV. Positions 321 to 333 are enriched in polar residues; the sequence is SRPNSSASKKQYV.

This sequence belongs to the connexin family. Alpha-type (group II) subfamily. In terms of assembly, a connexon is composed of a hexamer of connexins. As to expression, highly expressed in lung.

It localises to the cell membrane. Its subcellular location is the cell junction. The protein localises to the gap junction. One gap junction consists of a cluster of closely packed pairs of transmembrane channels, the connexons, through which materials of low MW diffuse from one cell to a neighboring cell. The chain is Gap junction alpha-4 protein (Gja4) from Mus musculus (Mouse).